Consider the following 221-residue polypeptide: Chaperone protein TorD (221 aa).

The protein belongs to the TorD/DmsD family. TorD subfamily.

The protein resides in the cytoplasm. Involved in the biogenesis of TorA. Acts on TorA before the insertion of the molybdenum cofactor and, as a result, probably favors a conformation of the apoenzyme that is competent for acquiring the cofactor. The polypeptide is Chaperone protein TorD (Shewanella pealeana (strain ATCC 700345 / ANG-SQ1)).